Here is a 701-residue protein sequence, read N- to C-terminus: Lutropin-choriogonadotropic hormone receptor (701 aa).

The N-terminal stretch at Met-1–Ala-26 is a signal peptide. Topologically, residues Leu-27–Arg-365 are extracellular. Asn-101 is a glycosylation site (N-linked (GlcNAc...) asparagine). LRR repeat units lie at residues Leu-124–Ser-149, Phe-151–Gly-173, Met-174–Gly-198, Thr-200–Gly-222, Ala-223–Ser-246, and Leu-250–Leu-271. Asn-176 and Asn-197 each carry an N-linked (GlcNAc...) asparagine glycan. 3 N-linked (GlcNAc...) asparagine glycosylation sites follow: Asn-293, Asn-301, and Asn-315. The residue at position 333 (Tyr-333) is a Sulfotyrosine. A helical transmembrane segment spans residues Val-366–Leu-387. The Cytoplasmic portion of the chain corresponds to Thr-388 to Arg-397. Residues Phe-398–Ala-418 form a helical membrane-spanning segment. Topologically, residues Ser-419 to Cys-441 are extracellular. A disulfide bridge connects residues Cys-441 and Cys-516. The chain crosses the membrane as a helical span at residues Ser-442–Leu-464. The Cytoplasmic segment spans residues Glu-465–His-484. The chain crosses the membrane as a helical span at residues Ala-485–Val-507. The Extracellular portion of the chain corresponds to Ser-508–Gln-527. The helical transmembrane segment at Val-528 to Ile-551 threads the bilayer. Topologically, residues Tyr-552–Lys-572 are cytoplasmic. A helical transmembrane segment spans residues Met-573–Phe-596. The Extracellular portion of the chain corresponds to Lys-597 to Lys-607. The chain crosses the membrane as a helical span at residues Val-608–Thr-629. Topologically, residues Lys-630–Cys-701 are cytoplasmic. Residues Cys-645 and Cys-646 are each lipidated (S-palmitoyl cysteine).

Belongs to the G-protein coupled receptor 1 family. FSH/LSH/TSH subfamily. In terms of processing, sulfated.

Its subcellular location is the cell membrane. Receptor for lutropin-choriogonadotropic hormone. The activity of this receptor is mediated by G proteins which activate adenylate cyclase. The chain is Lutropin-choriogonadotropic hormone receptor (LHCGR) from Bos taurus (Bovine).